A 684-amino-acid chain; its full sequence is Putative glucan endo-1,3-beta-glucosidase btgC (684 aa).

A compositionally biased stretch (polar residues) spans 1-10; sequence MAGVNRSFSY. Disordered regions lie at residues 1–38, 124–143, and 157–182; these read MAGV…LYST, AERD…APPD, and DSYS…TTPS. The Cytoplasmic portion of the chain corresponds to 1 to 302; it reads MAGVNRSFSY…HIIGGGSRKR (302 aa). Residues 12-32 show a composition bias toward basic and acidic residues; it reads RGDDALLRDDEREISPLRSAE. Residues 303–323 form a helical; Signal-anchor for type II membrane protein membrane-spanning segment; that stretch reads GWIVGLILAAVIVAAIVGGAV. The Extracellular segment spans residues 324–684; sequence GGILGHQEHD…IPDCGGKTIT (361 aa). The interval 330-358 is disordered; sequence QEHDGDTSSSSSSSSSSGTGSGGSDKGDG. Positions 336 to 347 are enriched in low complexity; that stretch reads TSSSSSSSSSSG. N-linked (GlcNAc...) asparagine glycosylation is found at Asn404, Asn427, Asn455, and Asn474. Glu487 functions as the Proton donor in the catalytic mechanism. Residue Glu586 is the Nucleophile of the active site. An N-linked (GlcNAc...) asparagine glycan is attached at Asn631.

It belongs to the glycosyl hydrolase 17 family.

The protein resides in the cell membrane. It carries out the reaction Hydrolysis of (1-&gt;3)-beta-D-glucosidic linkages in (1-&gt;3)-beta-D-glucans.. Its function is as follows. Glucanases play a role in cell expansion during growth, in cell-cell fusion during mating, and in spore release during sporulation. This enzyme may be involved in beta-glucan degradation. Active on laminarin and lichenan. The protein is Putative glucan endo-1,3-beta-glucosidase btgC (btgC) of Aspergillus niger (strain ATCC MYA-4892 / CBS 513.88 / FGSC A1513).